Consider the following 96-residue polypeptide: Probable quinol oxidase subunit 4 (96 aa).

Transmembrane regions (helical) follow at residues 8 to 28 (TVGF…TLYT), 36 to 56 (LTII…MFMH), and 68 to 88 (FKVI…YWVM).

Belongs to the cytochrome c oxidase bacterial subunit 4 family.

The protein resides in the cell membrane. It carries out the reaction 2 a quinol + O2 = 2 a quinone + 2 H2O. In terms of biological role, catalyzes quinol oxidation with the concomitant reduction of oxygen to water. In Staphylococcus aureus (strain USA300), this protein is Probable quinol oxidase subunit 4 (qoxD).